The sequence spans 261 residues: Ribosomal RNA large subunit methyltransferase E (261 aa).

5 residues coordinate S-adenosyl-L-methionine: Gly81, Trp83, Asp104, Asp120, and Asp144. Lys184 acts as the Proton acceptor in catalysis. Residues 233–261 (GNALGHEVEDDGPMPHDPREDATADEDQD) are disordered. The segment covering 245-254 (PMPHDPREDA) has biased composition (basic and acidic residues).

This sequence belongs to the class I-like SAM-binding methyltransferase superfamily. RNA methyltransferase RlmE family.

The protein resides in the cytoplasm. The enzyme catalyses uridine(2552) in 23S rRNA + S-adenosyl-L-methionine = 2'-O-methyluridine(2552) in 23S rRNA + S-adenosyl-L-homocysteine + H(+). Specifically methylates the uridine in position 2552 of 23S rRNA at the 2'-O position of the ribose in the fully assembled 50S ribosomal subunit. The sequence is that of Ribosomal RNA large subunit methyltransferase E from Allorhizobium ampelinum (strain ATCC BAA-846 / DSM 112012 / S4) (Agrobacterium vitis (strain S4)).